Reading from the N-terminus, the 103-residue chain is Co-chaperonin GroES (103 aa).

The segment at glycine 31 to valine 67 is disordered.

This sequence belongs to the GroES chaperonin family. Heptamer of 7 subunits arranged in a ring. Interacts with the chaperonin GroEL.

The protein localises to the cytoplasm. Functionally, together with the chaperonin GroEL, plays an essential role in assisting protein folding. The GroEL-GroES system forms a nano-cage that allows encapsulation of the non-native substrate proteins and provides a physical environment optimized to promote and accelerate protein folding. GroES binds to the apical surface of the GroEL ring, thereby capping the opening of the GroEL channel. The sequence is that of Co-chaperonin GroES from Prochlorococcus marinus (strain NATL2A).